Reading from the N-terminus, the 334-residue chain is Holliday junction branch migration complex subunit RuvB (334 aa).

The tract at residues 1-182 (MDKRMVDQEF…FGVHLRLEYY (182 aa)) is large ATPase domain (RuvB-L). ATP is bound by residues Leu21, Arg22, Gly63, Lys66, Thr67, Thr68, 129 to 131 (EDF), Arg172, Tyr182, and Arg219. A Mg(2+)-binding site is contributed by Thr67. A small ATPAse domain (RuvB-S) region spans residues 183 to 253 (NENDLKEIIT…TTKRALQLLQ (71 aa)). Positions 256-334 (QHGLDYIDHK…HFNTTNEKRE (79 aa)) are head domain (RuvB-H). DNA contacts are provided by Arg292, Arg311, and Arg316.

It belongs to the RuvB family. In terms of assembly, homohexamer. Forms an RuvA(8)-RuvB(12)-Holliday junction (HJ) complex. HJ DNA is sandwiched between 2 RuvA tetramers; dsDNA enters through RuvA and exits via RuvB. An RuvB hexamer assembles on each DNA strand where it exits the tetramer. Each RuvB hexamer is contacted by two RuvA subunits (via domain III) on 2 adjacent RuvB subunits; this complex drives branch migration. In the full resolvosome a probable DNA-RuvA(4)-RuvB(12)-RuvC(2) complex forms which resolves the HJ.

The protein localises to the cytoplasm. The catalysed reaction is ATP + H2O = ADP + phosphate + H(+). Its function is as follows. The RuvA-RuvB-RuvC complex processes Holliday junction (HJ) DNA during genetic recombination and DNA repair, while the RuvA-RuvB complex plays an important role in the rescue of blocked DNA replication forks via replication fork reversal (RFR). RuvA specifically binds to HJ cruciform DNA, conferring on it an open structure. The RuvB hexamer acts as an ATP-dependent pump, pulling dsDNA into and through the RuvAB complex. RuvB forms 2 homohexamers on either side of HJ DNA bound by 1 or 2 RuvA tetramers; 4 subunits per hexamer contact DNA at a time. Coordinated motions by a converter formed by DNA-disengaged RuvB subunits stimulates ATP hydrolysis and nucleotide exchange. Immobilization of the converter enables RuvB to convert the ATP-contained energy into a lever motion, pulling 2 nucleotides of DNA out of the RuvA tetramer per ATP hydrolyzed, thus driving DNA branch migration. The RuvB motors rotate together with the DNA substrate, which together with the progressing nucleotide cycle form the mechanistic basis for DNA recombination by continuous HJ branch migration. Branch migration allows RuvC to scan DNA until it finds its consensus sequence, where it cleaves and resolves cruciform DNA. The chain is Holliday junction branch migration complex subunit RuvB from Staphylococcus epidermidis (strain ATCC 35984 / DSM 28319 / BCRC 17069 / CCUG 31568 / BM 3577 / RP62A).